Here is a 345-residue protein sequence, read N- to C-terminus: N-acetyl-gamma-glutamyl-phosphate reductase (345 aa).

Residue C149 is part of the active site.

The protein belongs to the NAGSA dehydrogenase family. Type 1 subfamily.

It localises to the cytoplasm. The enzyme catalyses N-acetyl-L-glutamate 5-semialdehyde + phosphate + NADP(+) = N-acetyl-L-glutamyl 5-phosphate + NADPH + H(+). Its pathway is amino-acid biosynthesis; L-arginine biosynthesis; N(2)-acetyl-L-ornithine from L-glutamate: step 3/4. In terms of biological role, catalyzes the NADPH-dependent reduction of N-acetyl-5-glutamyl phosphate to yield N-acetyl-L-glutamate 5-semialdehyde. The protein is N-acetyl-gamma-glutamyl-phosphate reductase of Marinobacter nauticus (strain ATCC 700491 / DSM 11845 / VT8) (Marinobacter aquaeolei).